Here is a 561-residue protein sequence, read N- to C-terminus: Arginine--tRNA ligase (561 aa).

Residues 129 to 139 (ANPTGPLHVGH) carry the 'HIGH' region motif.

It belongs to the class-I aminoacyl-tRNA synthetase family. In terms of assembly, monomer.

The protein localises to the cytoplasm. It carries out the reaction tRNA(Arg) + L-arginine + ATP = L-arginyl-tRNA(Arg) + AMP + diphosphate. The chain is Arginine--tRNA ligase from Bordetella bronchiseptica (strain ATCC BAA-588 / NCTC 13252 / RB50) (Alcaligenes bronchisepticus).